Consider the following 378-residue polypeptide: Histone deacetylase 8 (378 aa).

Positions 15-325 are histone deacetylase; sequence RSVVYVYSPE…WTYLTGTVLG (311 aa). Residue aspartate 102 participates in substrate binding. Histidine 144 functions as the Proton acceptor in the catalytic mechanism. Glycine 152 lines the substrate pocket. A divalent metal cation-binding residues include aspartate 179, histidine 181, and aspartate 268. Substrate is bound at residue tyrosine 307.

It belongs to the histone deacetylase family. HD type 1 subfamily. It depends on a divalent metal cation as a cofactor.

The protein resides in the nucleus. It is found in the chromosome. Its subcellular location is the cytoplasm. It catalyses the reaction N(6)-acetyl-L-lysyl-[histone] + H2O = L-lysyl-[histone] + acetate. The catalysed reaction is N(6)-acetyl-L-lysyl-[protein] + H2O = L-lysyl-[protein] + acetate. The enzyme catalyses N(6)-(2E)-butenoyl-L-lysyl-[protein] + H2O = (2E)-2-butenoate + L-lysyl-[protein]. With respect to regulation, its activity is inhibited by trichostatin A (TSA) and butyrate, 2 well known histone deacetylase inhibitors. Its function is as follows. Histone deacetylase that catalyzes the deacetylation of lysine residues on the N-terminal part of the core histones (H2A, H2B, H3 and H4). Histone deacetylation gives a tag for epigenetic repression and plays an important role in transcriptional regulation, cell cycle progression and developmental events. Histone deacetylases act via the formation of large multiprotein complexes. Also involved in the deacetylation of non-histone proteins. In addition to protein deacetylase activity, also has protein-lysine deacylase activity: acts as a protein decrotonylase by mediating decrotonylation ((2E)-butenoyl) of histones. This is Histone deacetylase 8 (hdac8) from Danio rerio (Zebrafish).